We begin with the raw amino-acid sequence, 968 residues long: RNA polymerase-associated protein RapA (968 aa).

One can recognise a Helicase ATP-binding domain in the interval 164 to 334 (DVGRRHAPRV…FARLRLLDPN (171 aa)). 177–184 (DEVGLGKT) provides a ligand contact to ATP. Residues 280-283 (DEAH) carry the DEAH box motif. One can recognise a Helicase C-terminal domain in the interval 490–662 (RVEWLMGYLT…YLASPDQTEG (173 aa)).

Belongs to the SNF2/RAD54 helicase family. RapA subfamily. Interacts with the RNAP. Has a higher affinity for the core RNAP than for the holoenzyme. Its ATPase activity is stimulated by binding to RNAP.

Functionally, transcription regulator that activates transcription by stimulating RNA polymerase (RNAP) recycling in case of stress conditions such as supercoiled DNA or high salt concentrations. Probably acts by releasing the RNAP, when it is trapped or immobilized on tightly supercoiled DNA. Does not activate transcription on linear DNA. Probably not involved in DNA repair. The polypeptide is RNA polymerase-associated protein RapA (Escherichia fergusonii (strain ATCC 35469 / DSM 13698 / CCUG 18766 / IAM 14443 / JCM 21226 / LMG 7866 / NBRC 102419 / NCTC 12128 / CDC 0568-73)).